The following is a 138-amino-acid chain: Cysteine desulfuration protein SufE (138 aa).

Cys51 acts as the Cysteine persulfide intermediate in catalysis.

The protein belongs to the SufE family. Homodimer. Interacts with SufS.

The protein resides in the cytoplasm. It participates in cofactor biosynthesis; iron-sulfur cluster biosynthesis. Functionally, participates in cysteine desulfuration mediated by SufS. Cysteine desulfuration mobilizes sulfur from L-cysteine to yield L-alanine and constitutes an essential step in sulfur metabolism for biosynthesis of a variety of sulfur-containing biomolecules. Functions as a sulfur acceptor for SufS, by mediating the direct transfer of the sulfur atom from the S-sulfanylcysteine of SufS, an intermediate product of cysteine desulfuration process. The protein is Cysteine desulfuration protein SufE of Salmonella dublin (strain CT_02021853).